Consider the following 99-residue polypeptide: Protein AC150 (99 aa).

Residues 38-96 (GFSCYNKPIGVNFPHPTRCDAFYMCVGLNQKLELICPEGFEFDPDVKNCVPISDYGCTA) enclose the Chitin-binding type-2 domain. Cys73 and Cys86 are oxidised to a cystine.

It localises to the host nucleus. The protein localises to the virion. Plays a role in primary oral infection of the host. In Autographa californica nuclear polyhedrosis virus (AcMNPV), this protein is Protein AC150.